A 372-amino-acid polypeptide reads, in one-letter code: Lung adenoma susceptibility protein 2 (372 aa).

Positions Met-1 to Ser-31 are cleaved as a signal peptide. At Ser-161 the chain carries Phosphoserine. Residues Lys-248–Ala-268 are disordered. Positions Ser-255 to Ala-265 are enriched in polar residues.

It is found in the secreted. Might play a role in cell proliferation. This Homo sapiens (Human) protein is Lung adenoma susceptibility protein 2 (LAS2).